Consider the following 370-residue polypeptide: Probable endopolygalacturonase A (370 aa).

A signal peptide spans 1–19 (MPSAKPLFCLATLAGAALA). The propeptide occupies 20–32 (APAPSRVSDFTKR). A disulfide bond links Cys35 and Cys50. 6 PbH1 repeats span residues 162–192 (SDNL…DISE), 193–214 (STYI…AINS), 215–235 (GENI…SIGS), 244–265 (VKNV…RIKT), 273–295 (VEDI…VIEQ), and 307–352 (SNGV…DITG). Asp207 serves as the catalytic Proton donor. A disulfide bond links Cys209 and Cys225. The active site involves His229. N-linked (GlcNAc...) asparagine glycosylation occurs at Asn246. Intrachain disulfides connect Cys335/Cys340 and Cys359/Cys368.

This sequence belongs to the glycosyl hydrolase 28 family.

Its subcellular location is the secreted. It catalyses the reaction (1,4-alpha-D-galacturonosyl)n+m + H2O = (1,4-alpha-D-galacturonosyl)n + (1,4-alpha-D-galacturonosyl)m.. Involved in maceration and soft-rotting of plant tissue. Hydrolyzes the 1,4-alpha glycosidic bonds of de-esterified pectate in the smooth region of the plant cell wall. The polypeptide is Probable endopolygalacturonase A (pgaA) (Aspergillus niger (strain ATCC MYA-4892 / CBS 513.88 / FGSC A1513)).